The sequence spans 756 residues: Putative beta-xylosidase (756 aa).

A signal peptide spans 1 to 18; sequence MKKLLFTFLVSTGTIFFS. A lipid anchor (N-palmitoyl cysteine) is attached at C19. C19 carries S-diacylglycerol cysteine lipidation.

It belongs to the glycosyl hydrolase 3 family.

The protein resides in the cell outer membrane. Its function is as follows. Glycoside hydrolase probably involved in ulvan degradation. Ulvan is the main polysaccharide component of the Ulvales (green seaweed) cell wall. It is composed of disaccharide building blocks comprising 3-sulfated rhamnose (Rha3S) linked to D-glucuronic acid (GlcA), L-iduronic acid (IduA), or D-xylose (Xyl). The polypeptide is Putative beta-xylosidase (Formosa agariphila (strain DSM 15362 / KCTC 12365 / LMG 23005 / KMM 3901 / M-2Alg 35-1)).